The sequence spans 196 residues: Endonuclease V (196 aa).

Positions 37 and 98 each coordinate Mg(2+).

It belongs to the endonuclease V family. It depends on Mg(2+) as a cofactor.

The protein localises to the cytoplasm. It catalyses the reaction Endonucleolytic cleavage at apurinic or apyrimidinic sites to products with a 5'-phosphate.. DNA repair enzyme involved in the repair of deaminated bases. Selectively cleaves double-stranded DNA at the second phosphodiester bond 3' to a deoxyinosine leaving behind the intact lesion on the nicked DNA. The sequence is that of Endonuclease V from Sulfurisphaera tokodaii (strain DSM 16993 / JCM 10545 / NBRC 100140 / 7) (Sulfolobus tokodaii).